A 608-amino-acid polypeptide reads, in one-letter code: DNA mismatch repair protein MutL (608 aa).

Positions 363-397 (ASLAMARKPDPPRFHETARPQPDPRHTPGTESVSV) are disordered. The segment covering 369 to 390 (RKPDPPRFHETARPQPDPRHTP) has biased composition (basic and acidic residues).

This sequence belongs to the DNA mismatch repair MutL/HexB family.

Functionally, this protein is involved in the repair of mismatches in DNA. It is required for dam-dependent methyl-directed DNA mismatch repair. May act as a 'molecular matchmaker', a protein that promotes the formation of a stable complex between two or more DNA-binding proteins in an ATP-dependent manner without itself being part of a final effector complex. This chain is DNA mismatch repair protein MutL, found in Pelobacter propionicus (strain DSM 2379 / NBRC 103807 / OttBd1).